Reading from the N-terminus, the 133-residue chain is 6,7-dimethyl-8-ribityllumazine synthase (133 aa).

5-amino-6-(D-ribitylamino)uracil-binding positions include Phe11, 43–45, and 67–69; these read AYD and AIV. 72–73 is a (2S)-2-hydroxy-3-oxobutyl phosphate binding site; the sequence is DT. The active-site Proton donor is the His75. Phe100 serves as a coordination point for 5-amino-6-(D-ribitylamino)uracil. Arg115 contributes to the (2S)-2-hydroxy-3-oxobutyl phosphate binding site.

The protein belongs to the DMRL synthase family.

The catalysed reaction is (2S)-2-hydroxy-3-oxobutyl phosphate + 5-amino-6-(D-ribitylamino)uracil = 6,7-dimethyl-8-(1-D-ribityl)lumazine + phosphate + 2 H2O + H(+). Its pathway is cofactor biosynthesis; riboflavin biosynthesis; riboflavin from 2-hydroxy-3-oxobutyl phosphate and 5-amino-6-(D-ribitylamino)uracil: step 1/2. Functionally, catalyzes the formation of 6,7-dimethyl-8-ribityllumazine by condensation of 5-amino-6-(D-ribitylamino)uracil with 3,4-dihydroxy-2-butanone 4-phosphate. This is the penultimate step in the biosynthesis of riboflavin. This Halobacterium salinarum (strain ATCC 29341 / DSM 671 / R1) protein is 6,7-dimethyl-8-ribityllumazine synthase.